The following is a 1510-amino-acid chain: Chromosome partition protein MukB (1510 aa).

ATP is bound at residue 75–82; that stretch reads GGNGAGKS. Positions 346-706 form a coiled coil; that stretch reads QHRLVDLSRE…LDEQISRLSQ (361 aa). The segment at 707–824 is flexible hinge; the sequence is PDGSEDPRLN…EIPLFGCAAR (118 aa). 2 coiled-coil regions span residues 825 to 1154 and 1248 to 1304; these read EKRL…AAKV and IDAI…LQNI.

It belongs to the SMC family. MukB subfamily. As to quaternary structure, homodimerization via its hinge domain. Binds to DNA via its C-terminal region. Interacts, and probably forms a ternary complex, with MukE and MukF via its C-terminal region. The complex formation is stimulated by calcium or magnesium. Interacts with tubulin-related protein FtsZ.

The protein localises to the cytoplasm. The protein resides in the nucleoid. Its function is as follows. Plays a central role in chromosome condensation, segregation and cell cycle progression. Functions as a homodimer, which is essential for chromosome partition. Involved in negative DNA supercoiling in vivo, and by this means organize and compact chromosomes. May achieve or facilitate chromosome segregation by condensation DNA from both sides of a centrally located replisome during cell division. The protein is Chromosome partition protein MukB of Haemophilus influenzae (strain ATCC 51907 / DSM 11121 / KW20 / Rd).